Consider the following 439-residue polypeptide: Ribosomal protein uS12 methylthiotransferase RimO (439 aa).

One can recognise an MTTase N-terminal domain in the interval 7 to 119 (KQLCLISLGC…IDIMIAKKQN (113 aa)). [4Fe-4S] cluster is bound by residues C16, C50, C82, C151, C155, and C158. The region spanning 137 to 368 (TGSSVHAYVK…ALKHQNHSFK (232 aa)) is the Radical SAM core domain.

It belongs to the methylthiotransferase family. RimO subfamily. The cofactor is [4Fe-4S] cluster.

It localises to the cytoplasm. It catalyses the reaction L-aspartate(89)-[ribosomal protein uS12]-hydrogen + (sulfur carrier)-SH + AH2 + 2 S-adenosyl-L-methionine = 3-methylsulfanyl-L-aspartate(89)-[ribosomal protein uS12]-hydrogen + (sulfur carrier)-H + 5'-deoxyadenosine + L-methionine + A + S-adenosyl-L-homocysteine + 2 H(+). In terms of biological role, catalyzes the methylthiolation of an aspartic acid residue of ribosomal protein uS12. The chain is Ribosomal protein uS12 methylthiotransferase RimO from Helicobacter pylori (strain P12).